The sequence spans 661 residues: UvrABC system protein B (661 aa).

The Helicase ATP-binding domain maps to 25–182 (KGLNNKKRSQ…NDLVNLQYER (158 aa)). 38-45 (GITGSGKT) provides a ligand contact to ATP. Residues 91–114 (YYDYYQPEAYIPKTDVFIEKDSSI) carry the Beta-hairpin motif. The region spanning 430–592 (QVEDLVGEIQ…IIPKTINRTI (163 aa)) is the Helicase C-terminal domain. Positions 621-656 (KAHIDKLRKEMLKAASNLEFEQAAKLRDQLKTLEEA) constitute a UVR domain.

It belongs to the UvrB family. In terms of assembly, forms a heterotetramer with UvrA during the search for lesions. Interacts with UvrC in an incision complex.

The protein resides in the cytoplasm. The UvrABC repair system catalyzes the recognition and processing of DNA lesions. A damage recognition complex composed of 2 UvrA and 2 UvrB subunits scans DNA for abnormalities. Upon binding of the UvrA(2)B(2) complex to a putative damaged site, the DNA wraps around one UvrB monomer. DNA wrap is dependent on ATP binding by UvrB and probably causes local melting of the DNA helix, facilitating insertion of UvrB beta-hairpin between the DNA strands. Then UvrB probes one DNA strand for the presence of a lesion. If a lesion is found the UvrA subunits dissociate and the UvrB-DNA preincision complex is formed. This complex is subsequently bound by UvrC and the second UvrB is released. If no lesion is found, the DNA wraps around the other UvrB subunit that will check the other stand for damage. This is UvrABC system protein B from Rickettsia bellii (strain OSU 85-389).